Here is a 278-residue protein sequence, read N- to C-terminus: Mediator of RNA polymerase II transcription subunit 4 (278 aa).

Positions 57 to 88 (HARILTLRAQVEALEEQKKSSVTALATLRHEL) form a coiled coil. Disordered stretches follow at residues 120 to 181 (VPPT…EEEE) and 240 to 278 (VEAP…DLDD). Basic and acidic residues-rich tracts occupy residues 124–142 (YRER…KDDA) and 160–172 (DAPK…DNKP). The span at 250-268 (AEPVQAQAPRPARPAQPQA) shows a compositional bias: low complexity.

The protein belongs to the Mediator complex subunit 4 family. Component of the Mediator complex.

Its subcellular location is the nucleus. Functionally, component of the Mediator complex, a coactivator involved in the regulated transcription of nearly all RNA polymerase II-dependent genes. Mediator functions as a bridge to convey information from gene-specific regulatory proteins to the basal RNA polymerase II transcription machinery. Mediator is recruited to promoters by direct interactions with regulatory proteins and serves as a scaffold for the assembly of a functional preinitiation complex with RNA polymerase II and the general transcription factors. This chain is Mediator of RNA polymerase II transcription subunit 4 (MED4), found in Phaeosphaeria nodorum (strain SN15 / ATCC MYA-4574 / FGSC 10173) (Glume blotch fungus).